The primary structure comprises 259 residues: Adenosylcobinamide-GDP ribazoletransferase (259 aa).

Transmembrane regions (helical) follow at residues 27–47, 51–71, 100–120, 124–144, 175–195, and 219–239; these read ITFL…ILYI, FSHL…NGLN, VGAG…LSLA, LYIG…SMMI, FLAI…VIVA, and VIGF…IIIA.

Belongs to the CobS family. The cofactor is Mg(2+).

It is found in the cell membrane. The enzyme catalyses alpha-ribazole + adenosylcob(III)inamide-GDP = adenosylcob(III)alamin + GMP + H(+). It carries out the reaction alpha-ribazole 5'-phosphate + adenosylcob(III)inamide-GDP = adenosylcob(III)alamin 5'-phosphate + GMP + H(+). It participates in cofactor biosynthesis; adenosylcobalamin biosynthesis; adenosylcobalamin from cob(II)yrinate a,c-diamide: step 7/7. In terms of biological role, joins adenosylcobinamide-GDP and alpha-ribazole to generate adenosylcobalamin (Ado-cobalamin). Also synthesizes adenosylcobalamin 5'-phosphate from adenosylcobinamide-GDP and alpha-ribazole 5'-phosphate. This Thermoplasma volcanium (strain ATCC 51530 / DSM 4299 / JCM 9571 / NBRC 15438 / GSS1) protein is Adenosylcobinamide-GDP ribazoletransferase.